The chain runs to 295 residues: Small ribosomal subunit protein uS2 (295 aa).

Positions 264–295 are disordered; it reads KFSKTKNIDEETNTEFEQALNDTDENKNADNA.

The protein belongs to the universal ribosomal protein uS2 family.

The polypeptide is Small ribosomal subunit protein uS2 (Rickettsia akari (strain Hartford)).